The sequence spans 528 residues: Peptide chain release factor 3 (528 aa).

The tr-type G domain maps to 10-280; that stretch reads AKRRTFGIIS…IDMAPAPGPR (271 aa). Residues 19-26, 87-91, and 141-144 each bind GTP; these read SHPDAGKT, DTPGH, and NKLD.

Belongs to the TRAFAC class translation factor GTPase superfamily. Classic translation factor GTPase family. PrfC subfamily.

It is found in the cytoplasm. Increases the formation of ribosomal termination complexes and stimulates activities of RF-1 and RF-2. It binds guanine nucleotides and has strong preference for UGA stop codons. It may interact directly with the ribosome. The stimulation of RF-1 and RF-2 is significantly reduced by GTP and GDP, but not by GMP. This Desulfotalea psychrophila (strain LSv54 / DSM 12343) protein is Peptide chain release factor 3.